The sequence spans 1019 residues: TOG array regulator of axonemal microtubules protein 2 (1019 aa).

4 disordered regions span residues 28 to 54 (AGPR…PEPR), 131 to 158 (RRLS…PLHS), 249 to 311 (TPSR…AKKP), and 991 to 1019 (SLGG…FQLD). A compositionally biased stretch (polar residues) spans 1007–1019 (SKTTGSSYPFQLD).

It belongs to the Crescerin family.

This Homo sapiens (Human) protein is TOG array regulator of axonemal microtubules protein 2.